The chain runs to 207 residues: Urease accessory protein UreG (207 aa).

GTP is bound at residue 12-19 (GPVGAGKT).

It belongs to the SIMIBI class G3E GTPase family. UreG subfamily. Homodimer. UreD, UreF and UreG form a complex that acts as a GTP-hydrolysis-dependent molecular chaperone, activating the urease apoprotein by helping to assemble the nickel containing metallocenter of UreC. The UreE protein probably delivers the nickel.

It is found in the cytoplasm. In terms of biological role, facilitates the functional incorporation of the urease nickel metallocenter. This process requires GTP hydrolysis, probably effectuated by UreG. This Cereibacter sphaeroides (strain KD131 / KCTC 12085) (Rhodobacter sphaeroides) protein is Urease accessory protein UreG.